A 471-amino-acid polypeptide reads, in one-letter code: Anthocyanidin 3-O-glucosyltransferase (471 aa).

Histidine 24 acts as the Proton acceptor in catalysis. Histidine 24 serves as a coordination point for an anthocyanidin. Catalysis depends on aspartate 130, which acts as the Charge relay. Residue threonine 152 participates in UDP-alpha-D-glucose binding. Histidine 161 contributes to the an anthocyanidin binding site. Positions 352, 354, 369, 372, 374, and 377 each coordinate UDP-alpha-D-glucose. Position 392 (glycine 392) interacts with an anthocyanidin. Positions 393 and 394 each coordinate UDP-alpha-D-glucose.

It belongs to the UDP-glycosyltransferase family.

It carries out the reaction an anthocyanidin + UDP-alpha-D-glucose + H(+) = an anthocyanidin 3-O-beta-D-glucoside + UDP. It functions in the pathway pigment biosynthesis; anthocyanin biosynthesis. Functionally, in the presence of other necessary color factors, this glycosylation reaction allows the accumulation of anthocyanin pigments. The polypeptide is Anthocyanidin 3-O-glucosyltransferase (BZ1) (Zea mays (Maize)).